Consider the following 166-residue polypeptide: FMN reductase (NADH) RutF (166 aa).

The protein belongs to the non-flavoprotein flavin reductase family. RutF subfamily.

It catalyses the reaction FMNH2 + NAD(+) = FMN + NADH + 2 H(+). Catalyzes the reduction of FMN to FMNH2 which is used to reduce pyrimidine by RutA via the Rut pathway. The polypeptide is FMN reductase (NADH) RutF (Cronobacter sakazakii (strain ATCC BAA-894) (Enterobacter sakazakii)).